A 438-amino-acid polypeptide reads, in one-letter code: UDP-N-acetylmuramoylalanine--D-glutamate ligase (438 aa).

112–118 (GSNGKST) is a binding site for ATP.

This sequence belongs to the MurCDEF family.

Its subcellular location is the cytoplasm. It carries out the reaction UDP-N-acetyl-alpha-D-muramoyl-L-alanine + D-glutamate + ATP = UDP-N-acetyl-alpha-D-muramoyl-L-alanyl-D-glutamate + ADP + phosphate + H(+). It participates in cell wall biogenesis; peptidoglycan biosynthesis. Its function is as follows. Cell wall formation. Catalyzes the addition of glutamate to the nucleotide precursor UDP-N-acetylmuramoyl-L-alanine (UMA). This Salmonella choleraesuis (strain SC-B67) protein is UDP-N-acetylmuramoylalanine--D-glutamate ligase.